The primary structure comprises 111 residues: uncharacterized protein (111 aa).

The interval 12–34 (AWCPSRPPASAPSAPQEAARRGD) is disordered. The required for interaction with PPP3CA stretch occupies residues 71-76 (PNIIIT). 2 positions are modified to phosphothreonine: threonine 79 and threonine 81.

In terms of assembly, interacts (via PxIxIT motif, when phosphorylated on Thr-79) with PPP3CA.

This is an uncharacterized protein from Mus musculus (Mouse).